We begin with the raw amino-acid sequence, 426 residues long: Glucan 1,3-beta-glucosidase (426 aa).

The signal sequence occupies residues 1–20; it reads MLYPRALLPAAVALASLVLA. Glutamate 208 acts as the Proton donor in catalysis. 2 disulfides stabilise this stretch: cysteine 290/cysteine 416 and cysteine 315/cysteine 343. Residue glutamate 307 is the Nucleophile of the active site.

It belongs to the glycosyl hydrolase 5 (cellulase A) family.

Its subcellular location is the secreted. The catalysed reaction is Successive hydrolysis of beta-D-glucose units from the non-reducing ends of (1-&gt;3)-beta-D-glucans, releasing alpha-glucose.. In terms of biological role, beta-glucanases participate in the metabolism of beta-glucan, the main structural component of the cell wall. It could also function biosynthetically as a transglycosylase. The polypeptide is Glucan 1,3-beta-glucosidase (Blumeria graminis (Powdery mildew)).